Here is a 328-residue protein sequence, read N- to C-terminus: Putative P2Y purinoceptor 10 (328 aa).

The Extracellular segment spans residues 1-27 (MGSNSTSSAESNCNATYLPFQYSLYAT). N-linked (GlcNAc...) asparagine glycans are attached at residues Asn-4 and Asn-14. Residues 28-48 (TYIFIFIPGLLANSAALWVLC) form a helical membrane-spanning segment. The Cytoplasmic portion of the chain corresponds to 49–56 (RFISKKNK). Residues 57 to 77 (AIIFMINLSVADLAHILSLPL) form a helical membrane-spanning segment. Residues 78-91 (RIYYYINRHWPFQR) are Extracellular-facing. A helical transmembrane segment spans residues 92-112 (ALCLLCFYLKYLNMYASIFFL). Residues Cys-94 and Cys-170 are joined by a disulfide bond. Residues 113 to 137 (TCISLQRCLFLLKPFRARNWKRRYD) lie on the Cytoplasmic side of the membrane. Residues 138-158 (VGISAVIWIVVGTACLPFPIL) traverse the membrane as a helical segment. Residues 159–182 (RNAGLANSTDSCFADLGYKQMDAV) are Extracellular-facing. A helical transmembrane segment spans residues 183-203 (VLVTMVVIAELAGFVIPVITI). Over 204-233 (ACCTWKTTVSLKHPPIAFQGISERKKALRM) the chain is Cytoplasmic. The chain crosses the membrane as a helical span at residues 234–254 (VFMCAAVFVICFTPYHINFIF). Topologically, residues 255-277 (YTMVKESIITSCPTVKSTLYFHP) are extracellular. The chain crosses the membrane as a helical span at residues 278–298 (FSLCLASLCCLLDPILYYFMA). Topologically, residues 299–328 (SEFRDQLSRHGSSVTRSRLMSRESGSSMVN) are cytoplasmic.

It belongs to the G-protein coupled receptor 1 family.

The protein localises to the cell membrane. In terms of biological role, putative receptor for purines coupled to G-proteins. In Mus musculus (Mouse), this protein is Putative P2Y purinoceptor 10 (P2ry10).